A 250-amino-acid polypeptide reads, in one-letter code: uncharacterized protein (250 aa).

4Fe-4S ferredoxin-type domains follow at residues 38 to 67, 69 to 98, 124 to 153, 154 to 183, 191 to 220, and 220 to 249; these read KLLY…KAKV, KSAK…VIEG, KKYE…AVRR, KSIE…VERE, RDIE…QDGD, and DKVK…MWEK. C47, C50, C53, C57, C78, C81, C84, C88, C133, C136, C139, C143, C163, C166, C169, C173, C200, C203, C206, C210, C229, C232, C235, and C239 together coordinate [4Fe-4S] cluster.

This is an uncharacterized protein from Methanocaldococcus jannaschii (strain ATCC 43067 / DSM 2661 / JAL-1 / JCM 10045 / NBRC 100440) (Methanococcus jannaschii).